A 415-amino-acid polypeptide reads, in one-letter code: Serine hydroxymethyltransferase (415 aa).

(6S)-5,6,7,8-tetrahydrofolate contacts are provided by residues L120 and 124 to 126 (GHL). K229 bears the N6-(pyridoxal phosphate)lysine mark.

It belongs to the SHMT family. In terms of assembly, homodimer. Pyridoxal 5'-phosphate serves as cofactor.

The protein resides in the cytoplasm. The catalysed reaction is (6R)-5,10-methylene-5,6,7,8-tetrahydrofolate + glycine + H2O = (6S)-5,6,7,8-tetrahydrofolate + L-serine. It functions in the pathway one-carbon metabolism; tetrahydrofolate interconversion. It participates in amino-acid biosynthesis; glycine biosynthesis; glycine from L-serine: step 1/1. In terms of biological role, catalyzes the reversible interconversion of serine and glycine with tetrahydrofolate (THF) serving as the one-carbon carrier. This reaction serves as the major source of one-carbon groups required for the biosynthesis of purines, thymidylate, methionine, and other important biomolecules. Also exhibits THF-independent aldolase activity toward beta-hydroxyamino acids, producing glycine and aldehydes, via a retro-aldol mechanism. The sequence is that of Serine hydroxymethyltransferase from Desulforudis audaxviator (strain MP104C).